Here is a 65-residue protein sequence, read N- to C-terminus: Large ribosomal subunit protein bL35 (65 aa).

Residues 1-43 (MPKMKTRRGAAKRFAKTGSGKFKRRKQGLRHILTKKTAKRKSR) show a composition bias toward basic residues. A disordered region spans residues 1–49 (MPKMKTRRGAAKRFAKTGSGKFKRRKQGLRHILTKKTAKRKSRLGQSAT).

The protein belongs to the bacterial ribosomal protein bL35 family.

This chain is Large ribosomal subunit protein bL35, found in Maridesulfovibrio salexigens (strain ATCC 14822 / DSM 2638 / NCIMB 8403 / VKM B-1763) (Desulfovibrio salexigens).